Consider the following 199-residue polypeptide: dITP/XTP pyrophosphatase (199 aa).

7–12 (TGNAGK) lines the substrate pocket. Residues glutamate 37 and aspartate 66 each coordinate Mg(2+). Catalysis depends on aspartate 66, which acts as the Proton acceptor. Residues serine 67, 146–149 (FGYD), lysine 169, and 174–175 (HR) contribute to the substrate site.

The protein belongs to the HAM1 NTPase family. Homodimer. Mg(2+) serves as cofactor.

It catalyses the reaction XTP + H2O = XMP + diphosphate + H(+). It carries out the reaction dITP + H2O = dIMP + diphosphate + H(+). The catalysed reaction is ITP + H2O = IMP + diphosphate + H(+). Functionally, pyrophosphatase that catalyzes the hydrolysis of nucleoside triphosphates to their monophosphate derivatives, with a high preference for the non-canonical purine nucleotides XTP (xanthosine triphosphate), dITP (deoxyinosine triphosphate) and ITP. Seems to function as a house-cleaning enzyme that removes non-canonical purine nucleotides from the nucleotide pool, thus preventing their incorporation into DNA/RNA and avoiding chromosomal lesions. The polypeptide is dITP/XTP pyrophosphatase (Deinococcus geothermalis (strain DSM 11300 / CIP 105573 / AG-3a)).